We begin with the raw amino-acid sequence, 385 residues long: Tryptophan--tRNA ligase (385 aa).

Positions 82–90 match the 'HIGH' region motif; it reads PSGPMHIGH. The 'KMSKS' region signature appears at 253 to 257; sequence KMSAS.

The protein belongs to the class-I aminoacyl-tRNA synthetase family.

The protein localises to the cytoplasm. It carries out the reaction tRNA(Trp) + L-tryptophan + ATP = L-tryptophyl-tRNA(Trp) + AMP + diphosphate + H(+). The protein is Tryptophan--tRNA ligase of Pyrococcus furiosus (strain ATCC 43587 / DSM 3638 / JCM 8422 / Vc1).